The sequence spans 973 residues: ATP-dependent DNA helicase homolog RECG1, chloroplastic/mitochondrial (973 aa).

The segment at 1-208 is sufficient for chloroplastic and mitochondrial trgeting; it reads MAAVTLSPCS…ATSEVEATSD (208 aa). A disordered region spans residues 174 to 200; that stretch reads LLQNDDSSDPREDILDDGSSFTSKTAT. The 190-residue stretch at 536–725 folds into the Helicase ATP-binding domain; it reads DLKRPVPMNR…LYGDISLTQI (190 aa). An ATP-binding site is contributed by 549–556; the sequence is GDVGCGKT. The DEQQ box motif lies at 655 to 658; sequence DEQQ. The Helicase C-terminal domain maps to 746 to 904; sequence GIKEVYSMML…GFYLANIDLL (159 aa).

This sequence belongs to the helicase family. RecG subfamily. In terms of tissue distribution, expressed in most tissues, not seen in pollen, ovules or developing seeds.

The protein localises to the plastid. Its subcellular location is the chloroplast. It localises to the mitochondrion. It carries out the reaction Couples ATP hydrolysis with the unwinding of duplex DNA by translocating in the 3'-5' direction.. The enzyme catalyses ATP + H2O = ADP + phosphate + H(+). Its function is as follows. Plays a critical role in recombination and DNA repair. Helps process Holliday junction (HJ) intermediates to mature products by catalyzing branch migration. Has replication fork regression activity, unwinds stalled or blocked replication forks to make a HJ that can be resolved. Has a DNA unwinding activity characteristic of a DNA helicase with 3'-5' polarity. Functionally, plays a role in recombination surveillance and repair of double-stranded (ds)DNA breaks in the mitochondrion. May be able to dissociate D- and R-loops. Able to complement UV sensitivity of a recG deletion in E.coli. The protein is ATP-dependent DNA helicase homolog RECG1, chloroplastic/mitochondrial of Arabidopsis thaliana (Mouse-ear cress).